The following is an 875-amino-acid chain: Translation initiation factor IF-2 (875 aa).

Disordered regions lie at residues 1–20, 47–102, and 126–246; these read MSDSDKKPTLGRRPLGLKTA, LMGR…LREA, and EEER…DRRG. The segment covering 54-66 has biased composition (low complexity); the sequence is AAPTAAPAAAATP. Pro residues predominate over residues 67 to 85; that stretch reads APTPVAPPPPPPPPPPPPS. 2 stretches are compositionally biased toward basic and acidic residues: residues 88–102 and 126–140; these read RETRQEMQVRLLREA and EEERRRAEEKARAEA. 2 stretches are compositionally biased toward low complexity: residues 141-195 and 202-221; these read EAAA…PAAP and PAAPAVPAPRRFTPVAPAAP. Residues 223-246 show a composition bias toward basic and acidic residues; the sequence is KRPELAAKKPAHPQRDRKTEDRRG. Residues 374 to 544 enclose the tr-type G domain; that stretch reads ARPPVVTIMG…LLQAELLELK (171 aa). The segment at 383–390 is G1; the sequence is GHVDHGKT. Residue 383-390 coordinates GTP; sequence GHVDHGKT. Residues 408-412 are G2; the sequence is GITQH. The tract at residues 430–433 is G3; the sequence is DTPG. Residues 430–434 and 484–487 each bind GTP; these read DTPGH and TKAD. The G4 stretch occupies residues 484–487; sequence TKAD. The G5 stretch occupies residues 520–522; that stretch reads SAK.

Belongs to the TRAFAC class translation factor GTPase superfamily. Classic translation factor GTPase family. IF-2 subfamily.

It localises to the cytoplasm. Its function is as follows. One of the essential components for the initiation of protein synthesis. Protects formylmethionyl-tRNA from spontaneous hydrolysis and promotes its binding to the 30S ribosomal subunits. Also involved in the hydrolysis of GTP during the formation of the 70S ribosomal complex. The sequence is that of Translation initiation factor IF-2 from Novosphingobium aromaticivorans (strain ATCC 700278 / DSM 12444 / CCUG 56034 / CIP 105152 / NBRC 16084 / F199).